Consider the following 284-residue polypeptide: D-tagatose-1,6-bisphosphate aldolase subunit GatY (284 aa).

Residue Asp82 is the Proton donor of the active site. The Zn(2+) site is built by His83 and His180. Gly181 is a binding site for dihydroxyacetone phosphate. A Zn(2+)-binding site is contributed by His208. Dihydroxyacetone phosphate-binding positions include 209-211 and 230-233; these read GAS and NVAT.

This sequence belongs to the class II fructose-bisphosphate aldolase family. TagBP aldolase GatY subfamily. As to quaternary structure, forms a complex with GatZ. Zn(2+) is required as a cofactor.

It catalyses the reaction D-tagatofuranose 1,6-bisphosphate = D-glyceraldehyde 3-phosphate + dihydroxyacetone phosphate. The protein operates within carbohydrate metabolism; D-tagatose 6-phosphate degradation; D-glyceraldehyde 3-phosphate and glycerone phosphate from D-tagatose 6-phosphate: step 2/2. Its function is as follows. Catalytic subunit of the tagatose-1,6-bisphosphate aldolase GatYZ, which catalyzes the reversible aldol condensation of dihydroxyacetone phosphate (DHAP or glycerone-phosphate) with glyceraldehyde 3-phosphate (G3P) to produce tagatose 1,6-bisphosphate (TBP). Requires GatZ subunit for full activity and stability. Is involved in the catabolism of galactitol. The sequence is that of D-tagatose-1,6-bisphosphate aldolase subunit GatY from Escherichia coli O157:H7.